A 191-amino-acid chain; its full sequence is Peptidyl-tRNA hydrolase (191 aa).

Tyr-17 provides a ligand contact to tRNA. His-22 serves as the catalytic Proton acceptor. 3 residues coordinate tRNA: Tyr-68, Asn-70, and Asn-116.

It belongs to the PTH family. In terms of assembly, monomer.

Its subcellular location is the cytoplasm. The enzyme catalyses an N-acyl-L-alpha-aminoacyl-tRNA + H2O = an N-acyl-L-amino acid + a tRNA + H(+). Its function is as follows. Hydrolyzes ribosome-free peptidyl-tRNAs (with 1 or more amino acids incorporated), which drop off the ribosome during protein synthesis, or as a result of ribosome stalling. In terms of biological role, catalyzes the release of premature peptidyl moieties from peptidyl-tRNA molecules trapped in stalled 50S ribosomal subunits, and thus maintains levels of free tRNAs and 50S ribosomes. In Francisella tularensis subsp. holarctica (strain FTNF002-00 / FTA), this protein is Peptidyl-tRNA hydrolase.